A 384-amino-acid polypeptide reads, in one-letter code: Succinyl-diaminopimelate desuccinylase (384 aa).

Residue His71 coordinates Zn(2+). Residue Asp73 is part of the active site. A Zn(2+)-binding site is contributed by Asp104. Glu139 serves as the catalytic Proton acceptor. Residues Glu140, Glu168, and His357 each coordinate Zn(2+).

The protein belongs to the peptidase M20A family. DapE subfamily. Homodimer. Requires Zn(2+) as cofactor. Co(2+) serves as cofactor.

The enzyme catalyses N-succinyl-(2S,6S)-2,6-diaminopimelate + H2O = (2S,6S)-2,6-diaminopimelate + succinate. The protein operates within amino-acid biosynthesis; L-lysine biosynthesis via DAP pathway; LL-2,6-diaminopimelate from (S)-tetrahydrodipicolinate (succinylase route): step 3/3. Functionally, catalyzes the hydrolysis of N-succinyl-L,L-diaminopimelic acid (SDAP), forming succinate and LL-2,6-diaminopimelate (DAP), an intermediate involved in the bacterial biosynthesis of lysine and meso-diaminopimelic acid, an essential component of bacterial cell walls. The chain is Succinyl-diaminopimelate desuccinylase from Bradyrhizobium sp. (strain BTAi1 / ATCC BAA-1182).